Here is a 47-residue protein sequence, read N- to C-terminus: Large ribosomal subunit protein bL34 (47 aa).

Belongs to the bacterial ribosomal protein bL34 family.

The protein is Large ribosomal subunit protein bL34 of Mycobacterium sp. (strain JLS).